The sequence spans 30 residues: Bowman-Birk type proteinase inhibitor 4 (30 aa).

Disulfide bonds link Cys9–Cys24 and Cys14–Cys22.

Functionally, inhibits trypsin (IC(50)=17.60 nM) and, to a lesser extent, alpha-chymotrypsin (IC(50)=2.38 uM). This is Bowman-Birk type proteinase inhibitor 4 from Lathyrus sativus (White vetchling).